The sequence spans 518 residues: Protein CYCLOPS (518 aa).

A disordered region spans residues 401–451 (DKKRKSLERYGSITSAVSDDKGDTTKKRRVERSRKMAEAKERNSTPSVPSD). 2 consecutive short sequence motifs (nuclear localization signal) follow at residues 402–405 (KKRK) and 426–429 (KKRR). Basic and acidic residues predominate over residues 433-443 (SRKMAEAKERN). Positions 452 to 518 (MQAVLKRCEN…ERILSETEKM (67 aa)) form a coiled coil.

It belongs to the CYCLOPS family. Forms homodimers. Interacts with CCAMK. In terms of processing, phosphorylated at the N-terminus by CCAMK. Expressed in roots.

It is found in the nucleus. In terms of biological role, involved in symbiotic signaling. Required for root infection by symbiotic rhizobia, infection thread (IT) formation, and nodule development. Probably not involved in nodule organogenesis. Involved in arbuscular mycorrhizal (AM) symbiosis. Required for fungal infection of the outer cortical cell layers, and for arbuscule development during the AM symbiosis, by binding, as a complex comprising CCaMK, CYCLOPS, and DELLA, to RAM1 promoter cis element thus promoting its expression. Acts downstream of CCAMK. Binds to the promoter of ERN1 and strongly transactivates ERN1, a transcriptional regulator required for nodulation. The protein is Protein CYCLOPS of Lotus japonicus (Lotus corniculatus var. japonicus).